The chain runs to 561 residues: uncharacterized protein (561 aa).

2 helical membrane passes run F29 to I49 and F80 to I100.

It localises to the cell membrane. This is an uncharacterized protein from Mycoplasma genitalium (strain ATCC 33530 / DSM 19775 / NCTC 10195 / G37) (Mycoplasmoides genitalium).